A 187-amino-acid polypeptide reads, in one-letter code: UPF0301 protein KPN78578_33170 (187 aa).

It belongs to the UPF0301 (AlgH) family.

This is UPF0301 protein KPN78578_33170 from Klebsiella pneumoniae subsp. pneumoniae (strain ATCC 700721 / MGH 78578).